The sequence spans 198 residues: Recombination protein RecR (198 aa).

A C4-type zinc finger spans residues 57 to 72; it reads CSVCGHITENDPCYIC. The Toprim domain maps to 80–175; the sequence is SVICVVEDDK…KVTRLAQGLS (96 aa).

Belongs to the RecR family.

May play a role in DNA repair. It seems to be involved in an RecBC-independent recombinational process of DNA repair. It may act with RecF and RecO. This chain is Recombination protein RecR, found in Staphylococcus epidermidis (strain ATCC 35984 / DSM 28319 / BCRC 17069 / CCUG 31568 / BM 3577 / RP62A).